We begin with the raw amino-acid sequence, 465 residues long: Antithrombin-III (465 aa).

An N-terminal signal peptide occupies residues 1–32 (MISNGIGTVTAGKRSICLLPLLLIGLWGCVTC). Disulfide bonds link C41-C161 and C54-C128. Phosphothreonine is present on T64. S69 is subject to Phosphoserine. W82 serves as a coordination point for heparin. N-linked (GlcNAc...) asparagine glycosylation is present at N129. A heparin-binding site is contributed by R162. Residue N168 is glycosylated (N-linked (GlcNAc...) asparagine). Position 178 (R178) interacts with heparin. N-linked (GlcNAc...) asparagine glycans are attached at residues N188 and N225. Cysteines 280 and 463 form a disulfide.

This sequence belongs to the serpin family. As to quaternary structure, forms protease inhibiting heterodimer with TMPRSS7. Post-translationally, phosphorylated by FAM20C in the extracellular medium. As to expression, plasma.

The protein localises to the secreted. It localises to the extracellular space. Its function is as follows. Most important serine protease inhibitor in plasma that regulates the blood coagulation cascade. AT-III inhibits thrombin, matriptase-3/TMPRSS7, as well as factors IXa, Xa and XIa. Its inhibitory activity is greatly enhanced in the presence of heparin. This Bos taurus (Bovine) protein is Antithrombin-III (SERPINC1).